The chain runs to 80 residues: Delta-actitoxin-Amc2a (80 aa).

Residues 1-19 (MNKVLFLCLVVLCATSAFA) form the signal peptide. Residues 20–30 (AEEEYVERAPV) constitute a propeptide that is removed on maturation. 3 disulfide bridges follow: cysteine 37/cysteine 73, cysteine 39/cysteine 65, and cysteine 55/cysteine 74. Proline 56 carries the hydroxyproline modification.

This sequence belongs to the sea anemone type 3 (BDS) potassium channel toxin family.

It is found in the secreted. It localises to the nematocyst. Functionally, neurotoxon that induces paralysis when injected into crabs. This chain is Delta-actitoxin-Amc2a, found in Antheopsis maculata (Sea anemone).